The sequence spans 362 residues: Porin Omp2b (362 aa).

Residues 1–22 (MNIKSLLLGSAAALVAASGAQA) form the signal peptide.

It belongs to the alphaproteobacteria porin family. Homotrimer.

Its subcellular location is the cell outer membrane. Functionally, forms passive diffusion pores that allow small molecular weight hydrophilic materials across the outer membrane. This is Porin Omp2b (omp2b) from Brucella canis (strain ATCC 23365 / NCTC 10854 / RM-666).